Consider the following 608-residue polypeptide: X-ray repair cross-complementing protein 6 (608 aa).

Residues 1 to 11 are compositionally biased toward basic and acidic residues; sequence MSEWESYYKTE. Positions 1 to 29 are disordered; it reads MSEWESYYKTEGEEEEEEEESPDTGGEYK. The residue at position 2 (Ser2) is an N-acetylserine. Phosphoserine is present on Ser2. The residue at position 6 (Ser6) is a Phosphoserine; by PRKDC. Residues 12–22 show a composition bias toward acidic residues; the sequence is GEEEEEEEESP. Residue Lys29 is the Schiff-base intermediate with DNA; for 5'-deoxyribose-5-phosphate lyase activity of the active site. Lys29 carries the N6-acetyllysine modification. A Phosphoserine; by PRKDC modification is found at Ser49. Positions 259-466 constitute a Ku domain; the sequence is FKLGEDVVLM…IDKMKAIVQK (208 aa). The segment at 275–339 is DNA-binding; the sequence is VQKANKPFPV…EETEELKRFD (65 aa). Lys315 participates in a covalent cross-link: Glycyl lysine isopeptide (Lys-Gly) (interchain with G-Cter in SUMO2). 3 positions are modified to N6-acetyllysine: Lys329, Lys336, and Lys459. Residues 371-480 form an interaction with XRCC5 region; it reads SLVSGSSTLF…YRSDSFENPV (110 aa). A phosphoserine mark is found at Ser475, Ser518, and Ser548. A disordered region spans residues 534–557; it reads PEGKVAKRKQDDEGSTSKKPKVEL. Positions 537–557 are enriched in basic and acidic residues; the sequence is KVAKRKQDDEGSTSKKPKVEL. An interaction with DEAF1 region spans residues 548 to 607; it reads STSKKPKVELSEEELKAHFRKGTLGKLTVPTLKDICKAHGLKSGPKKQELLDALIRHLEK. Lys554 is covalently cross-linked (Glycyl lysine isopeptide (Lys-Gly) (interchain with G-Cter in SUMO2)). Ser558 is subject to Phosphoserine. Lys568 is subject to N6,N6,N6-trimethyllysine. The SAP domain occupies 571–605; the sequence is LGKLTVPTLKDICKAHGLKSGPKKQELLDALIRHL. The interaction with BAX stretch occupies residues 576–581; it reads VPTLKD.

This sequence belongs to the ku70 family. Heterodimer composed of XRCC5/Ku80 and XRCC6/Ku70. Component of the core long-range non-homologous end joining (NHEJ) complex (also named DNA-PK complex) composed of PRKDC, LIG4, XRCC4, XRCC6/Ku70, XRCC5/Ku86 and NHEJ1/XLF. Additional component of the NHEJ complex includes PAXX. Following autophosphorylation, PRKDC dissociates from DNA, leading to formation of the short-range NHEJ complex, composed of LIG4, XRCC4, XRCC6/Ku70, XRCC5/Ku86 and NHEJ1/XLF. The XRCC5-XRCC6 dimer also associates with NAA15, and this complex binds to the osteocalcin promoter and activates osteocalcin expression. In addition, XRCC6 interacts with the osteoblast-specific transcription factors MSX2, RUNX2 and DLX5. Interacts with ELF3. Interacts with ATP23. The XRCC5-XRRC6 dimer associates in a DNA-dependent manner with APEX1. Binds to CDK9. Identified in a complex with DEAF1 and XRCC5. Interacts with DEAF1 (via the SAND domain); the interaction is direct and may be inhibited by DNA-binding. Interacts with CLU. Interacts with NR4A3; the DNA-dependent protein kinase complex DNA-PK phosphorylates and activates NR4A3 and prevents NR4A3 ubiquitinylation and degradation. Interacts with CYREN (via KBM motif). Interacts (via N-terminus) with HSF1 (via N-terminus); this interaction is direct and prevents XRCC5/XRCC6 heterodimeric binding and non-homologous end joining (NHEJ) repair activities induced by ionizing radiation (IR). Part of the HDP-RNP complex composed of at least HEXIM1, PRKDC, XRCC5, XRCC6, paraspeckle proteins (SFPQ, NONO, PSPC1, RBM14, and MATR3) and NEAT1 RNA. Interacts with HMBOX1. Interacts with ATF7. Interacts with APLF (via KBM motif). Interacts with WRN (via KBM motif). The XRCC5-XRCC6 dimer associates with ALKBH2. Interacts with TPRN; TPRN interacts with a number of DNA damage response proteins, is recruited to sites of DNA damage and may play a role in DNA damage repair. When not acetylated, interacts with BAX. Interacts with ERCC6L2. In terms of processing, phosphorylation by PRKDC may enhance helicase activity. Phosphorylation of Ser-49 does not affect DNA repair. Post-translationally, ADP-ribosylated by PARP3. Methylation by SETD4 leads to accumulation in the cytoplasm and is a prerequisite for acetylation, possibly due to the change of subcellular from the nucleus to the cytosol initiated by methylation, acetylation occurring in the cytosol. In terms of processing, acetylation can be catalyzed in vitro by CREBBP/CBP and KAT2B/PCAF.

It is found in the nucleus. The protein localises to the chromosome. It localises to the cytoplasm. Functionally, single-stranded DNA-dependent ATP-dependent helicase that plays a key role in DNA non-homologous end joining (NHEJ) by recruiting DNA-PK to DNA. Required for double-strand break repair and V(D)J recombination. Also has a role in chromosome translocation. Has a role in chromosome translocation. The DNA helicase II complex binds preferentially to fork-like ends of double-stranded DNA in a cell cycle-dependent manner. It works in the 3'-5' direction. During NHEJ, the XRCC5-XRRC6 dimer performs the recognition step: it recognizes and binds to the broken ends of the DNA and protects them from further resection. Binding to DNA may be mediated by XRCC6. The XRCC5-XRRC6 dimer acts as a regulatory subunit of the DNA-dependent protein kinase complex DNA-PK by increasing the affinity of the catalytic subunit PRKDC to DNA by 100-fold. The XRCC5-XRRC6 dimer is probably involved in stabilizing broken DNA ends and bringing them together. The assembly of the DNA-PK complex to DNA ends is required for the NHEJ ligation step. Probably also acts as a 5'-deoxyribose-5-phosphate lyase (5'-dRP lyase), by catalyzing the beta-elimination of the 5' deoxyribose-5-phosphate at an abasic site near double-strand breaks. 5'-dRP lyase activity allows to 'clean' the termini of abasic sites, a class of nucleotide damage commonly associated with strand breaks, before such broken ends can be joined. The XRCC5-XRRC6 dimer together with APEX1 acts as a negative regulator of transcription. In association with NAA15, the XRCC5-XRRC6 dimer binds to the osteocalcin promoter and activates osteocalcin expression. Plays a role in the regulation of DNA virus-mediated innate immune response by assembling into the HDP-RNP complex, a complex that serves as a platform for IRF3 phosphorylation and subsequent innate immune response activation through the cGAS-STING pathway. Negatively regulates apoptosis by interacting with BAX and sequestering it from the mitochondria. Might have deubiquitination activity, acting on BAX. The polypeptide is X-ray repair cross-complementing protein 6 (Xrcc6) (Mus musculus (Mouse)).